The primary structure comprises 407 residues: MGAVPLKNNKPVEAGVRTVTVLGATGSIGDSTMDLLRGAPGRYRVEALTANSNVEALVKLAREFAARFVAVADPARFGELKDALAGSGIECGVGESAIIEAASRPADWLMAAVSGAAGLKPALAAVDRGTTIALANKECLVCAGDFFMQRAAKAGACILPADSEHNALFQALSSGNRDELTRVIITASGGPFRTWAAADIEKATLAQALKHPNWSMGRKITIDSASMMNKGLEVIEAACLFTLTPDEIDVLVHPQSIVHGMVEFSDRSVVAQLGTPDMRTPIAHCLGWPERIVGPAAKLDLASIGQLTFEAPDFTRFPALRLAYDALRTGNGATTVYNAANEIAVAAFIGEKIRFGAIARLVEATMNGWVRAGNLAPLASADDAIAIDHNARNMAASLLPQIAAKAT.

Positions 25, 26, 27, 28, 53, and 136 each coordinate NADPH. A 1-deoxy-D-xylulose 5-phosphate-binding site is contributed by Lys137. NADPH is bound at residue Glu138. Asp162 contacts Mn(2+). 1-deoxy-D-xylulose 5-phosphate-binding residues include Ser163, Glu164, Ser188, and His211. Mn(2+) is bound at residue Glu164. Gly217 lines the NADPH pocket. 1-deoxy-D-xylulose 5-phosphate contacts are provided by Ser224, Asn229, Lys230, and Glu233. Glu233 contacts Mn(2+).

The protein belongs to the DXR family. The cofactor is Mg(2+). Requires Mn(2+) as cofactor.

The catalysed reaction is 2-C-methyl-D-erythritol 4-phosphate + NADP(+) = 1-deoxy-D-xylulose 5-phosphate + NADPH + H(+). It functions in the pathway isoprenoid biosynthesis; isopentenyl diphosphate biosynthesis via DXP pathway; isopentenyl diphosphate from 1-deoxy-D-xylulose 5-phosphate: step 1/6. Functionally, catalyzes the NADPH-dependent rearrangement and reduction of 1-deoxy-D-xylulose-5-phosphate (DXP) to 2-C-methyl-D-erythritol 4-phosphate (MEP). This chain is 1-deoxy-D-xylulose 5-phosphate reductoisomerase, found in Nitrobacter hamburgensis (strain DSM 10229 / NCIMB 13809 / X14).